A 340-amino-acid chain; its full sequence is Major histocompatibility complex class I-related gene protein (340 aa).

Residues 1 to 22 (MGELMAFLLPLIIVLMVKHSNS) form the signal peptide. The tract at residues 23 to 109 (RTHSLRYFRL…KRLQRHYNHS (87 aa)) is alpha-1. The tract at residues 23–201 (RTHSLRYFRL…EYGKDTLQRT (179 aa)) is antigen-binding cleft. At 23-302 (RTHSLRYFRL…QESEAIPLVM (280 aa)) the chain is on the extracellular side. 8-(9H-purin-6-yl)-2-oxa-8-azabicyclo[3.3.1]nona-3,6-diene-4,6-dicarbaldehyde contacts are provided by tyrosine 29 and arginine 31. The 5-(2-oxoethylideneamino)-6-(D-ribitylamino)uracil site is built by arginine 31, serine 46, and lysine 65. Positions 31, 46, and 65 each coordinate 5-(2-oxopropylideneamino)-6-(D-ribitylamino)uracil. Residues arginine 31, serine 46, and lysine 65 each contribute to the 7-hydroxy-6-methyl-8-(1-D-ribityl)lumazine site. 2 residues coordinate 8-(9H-purin-6-yl)-2-oxa-8-azabicyclo[3.3.1]nona-3,6-diene-4,6-dicarbaldehyde: lysine 65 and histidine 80. Lysine 65 lines the 2-amino-4-oxopteridine-6-carbaldehyde pocket. Lysine 65 lines the pyridoxal pocket. A glycan (N-linked (GlcNAc...) asparagine) is linked at asparagine 107. The alpha-2 stretch occupies residues 110–201 (GSHTYQRMIG…EYGKDTLQRT (92 aa)). Residue arginine 116 coordinates 8-(9H-purin-6-yl)-2-oxa-8-azabicyclo[3.3.1]nona-3,6-diene-4,6-dicarbaldehyde. Positions 116, 174, and 175 each coordinate 5-(2-oxoethylideneamino)-6-(D-ribitylamino)uracil. Residues arginine 116, tyrosine 174, and glutamine 175 each contribute to the 5-(2-oxopropylideneamino)-6-(D-ribitylamino)uracil site. Residues arginine 116, tyrosine 174, and glutamine 175 each coordinate 7-hydroxy-6-methyl-8-(1-D-ribityl)lumazine. 2 cysteine pairs are disulfide-bonded: cysteine 120-cysteine 183 and cysteine 222-cysteine 278. The interval 202 to 293 (EPPLVRVNRK…GVHMVLQVPQ (92 aa)) is alpha-3. In terms of domain architecture, Ig-like C1-type spans 203-282 (PPLVRVNRKE…SNLYSCHVEH (80 aa)). The interval 294 to 302 (ESEAIPLVM) is connecting peptide. The chain crosses the membrane as a helical span at residues 303-323 (KAVSGSIVFVIVLTGVGVLVW). The Cytoplasmic segment spans residues 324-340 (RRRPREQNGAVYLPTPD).

Belongs to the MHC class I family. As to quaternary structure, heterotrimer that consists of MR1, B2M and metabolite antigen. Major classes of metabolite ligands presented by MR1 include riboflavin-related antigens, pyrimidines and ribityl lumazines, nucleobase adducts and folate derivatives. Forms reversible covalent Schiff base complexes with microbial pyrimidine-based metabolite, which serves as a molecular switch triggering complete folding, stable association with B2M and translocation of the ternary complex from endoplasmic reticulum to the plasma membrane. Alternatively, forms non-Schiff base complexes with ribityl lumazines. On antigen-presenting cells, the ternary complex interacts with TCR on MR1-restricted T cells. Interacts with TAPBP and TAPBPL chaperones in the endoplasmic reticulum. TAPBP associated or not with MHC class I peptide loading complex binds ligand-free MR1 or MR1-B2M complex, providing for stable MR1 pools ready for metabolite antigen processing. TAPBPL interacts with MR1 in a ligand-independent way; this interaction may stabilize MR1 pool and facilitate ligand loading and dissociation. Structurally, MR1-B2M heterodimer adopts a topology similar to classical MHC class I molecules, with alpha-1 and alpha-2 domains of MR1 forming the antigen-binding cleft composed of two alpha-helices resting on a floor of 7-stranded anti-parallel beta-pleated sheet. MR1-B2M heterodimer (via alpha-helices) interacts with TCR (via CDR domains). Post-translationally, N-glycosylated.

The protein resides in the cell membrane. Its subcellular location is the endoplasmic reticulum membrane. The protein localises to the golgi apparatus membrane. It localises to the early endosome membrane. It is found in the late endosome membrane. Antigen-presenting molecule specialized in displaying microbial pyrimidine-based metabolites to alpha-beta T cell receptors (TCR) on innate-type mucosal-associated invariant T (MAIT) cells. In complex with B2M preferentially presents riboflavin-derived metabolites to semi-invariant TCRs on MAIT cells, guiding immune surveillance of the microbial metabolome at mucosal epithelial barriers. Signature pyrimidine-based microbial antigens are generated via non-enzymatic condensation of metabolite intermediates of the riboflavin pathway with by-products arising from other metabolic pathways such as glycolysis. Typical potent antigenic metabolites are 5-(2-oxoethylideneamino)-6-D-ribitylaminouracil (5-OE-RU) and 5-(2-oxopropylideneamino)-6-D-ribitylaminouracil (5-OP-RU), products of condensation of 5-amino-6-D-ribityaminouracil (5-A-RU) with glyoxal or methylglyoxal by-products, respectively. May present microbial antigens to various MAIT cell subsets, providing for unique recognition of diverse microbes, including pathogens that do not synthesize riboflavin. Upon antigen recognition, elicits rapid innate-type MAIT cell activation to eliminate pathogenic microbes by directly killing infected cells. During T cell development, drives thymic selection and post-thymic terminal differentiation of MAIT cells in a process dependent on commensal microflora. Acts as an immune sensor of cancer cell metabolome. May present a tumor-specific or -associated metabolite essential for cancer cell survival to a pan-cancer TCR on a non-MAIT CD8-positive T cell clone, triggering T cell-mediated killing of a wide range of cancer cell types. May present tumor-enriched pyridoxal and pyridoxal 5'-phosphate antigens, enabling preferential recognition of cancer cells. Presents nucleobase carbonyl adducts generated during oxidative stress. Captures M3Ade, a nucleobase adduct composed of one adenine modified by a malondialdehyde trimer, for recognition by MR1-restricted T cell clones expressing a polyclonal TCR repertoire. The chain is Major histocompatibility complex class I-related gene protein from Pongo pygmaeus (Bornean orangutan).